A 282-amino-acid chain; its full sequence is Casein kinase II subunit beta-2 (282 aa).

The interval 1–92 (MYRERGMVGS…ESEVSGSDGE (92 aa)) is disordered. The span at 13–28 (EVVDRKRINEIHDNRP) shows a compositional bias: basic and acidic residues. Polar residues-rich tracts occupy residues 29 to 47 (SHSM…STSV) and 61 to 71 (RSGSISKTNIS). Residues 75–92 (DISDTDSEESEVSGSDGE) show a composition bias toward acidic residues.

It belongs to the casein kinase 2 subunit beta family. In terms of assembly, heterotetramer of two catalytic alpha subunits and two regulatory beta subunits. Interacts with CCA1. Post-translationally, phosphorylated by alpha subunit.

The protein resides in the cytoplasm. It localises to the cytosol. It is found in the nucleus. In terms of biological role, plays a complex role in regulating the basal catalytic activity of the alpha subunit. The tetrameric holoenzyme CK2, composed of two alpha and two beta subunits, phosphorylates the transcription factor PIF1 after an exposure to light, resulting in a proteasome-dependent degradation of PIF1 and promotion of photomorphogenesis. CK2 phosphorylates translation initiation factors. May participate in the regulation of the initiation of translation. In Arabidopsis thaliana (Mouse-ear cress), this protein is Casein kinase II subunit beta-2 (CKB2).